The sequence spans 494 residues: Alpha-amylase-related protein (494 aa).

The signal sequence occupies residues methionine 1–alanine 20. Glutamine 21 is subject to Pyrrolidone carboxylic acid. Cysteine 48 and cysteine 104 are disulfide-bonded. Positions 118, 169, and 178 each coordinate Ca(2+). Cysteine 157 and cysteine 171 form a disulfide bridge. Residue arginine 206 coordinates chloride. Aspartate 208 functions as the Nucleophile in the catalytic mechanism. A Ca(2+)-binding site is contributed by histidine 212. The Proton donor role is filled by glutamate 245. 2 residues coordinate chloride: asparagine 308 and arginine 343. 3 cysteine pairs are disulfide-bonded: cysteine 376-cysteine 382, cysteine 418-cysteine 441, and cysteine 448-cysteine 460.

This sequence belongs to the glycosyl hydrolase 13 family. Monomer. Requires Ca(2+) as cofactor. Chloride is required as a cofactor.

Its subcellular location is the secreted. It catalyses the reaction Endohydrolysis of (1-&gt;4)-alpha-D-glucosidic linkages in polysaccharides containing three or more (1-&gt;4)-alpha-linked D-glucose units.. The sequence is that of Alpha-amylase-related protein (Amyrel) from Drosophila varians (Fruit fly).